Here is a 402-residue protein sequence, read N- to C-terminus: Type II NADH:quinone oxidoreductase (402 aa).

FAD is bound by residues 12–16 (GAGYA), 39–40 (NK), and Val-83. Glu-172 is an active-site residue. Residues Asp-302, 319 to 320 (AQ), and Lys-379 each bind FAD.

Belongs to the NADH dehydrogenase family. The cofactor is FAD.

It is found in the cell membrane. The catalysed reaction is a quinone + NADH + H(+) = a quinol + NAD(+). Its function is as follows. Alternative, nonproton pumping NADH:quinone oxidoreductase that delivers electrons to the respiratory chain by oxidation of NADH and reduction of quinones, and contributes to the regeneration of NAD(+). The polypeptide is Type II NADH:quinone oxidoreductase (Staphylococcus aureus (strain bovine RF122 / ET3-1)).